A 75-amino-acid polypeptide reads, in one-letter code: Large ribosomal subunit protein bL31 (75 aa).

Zn(2+) is bound by residues Cys16, Cys18, Cys37, and Cys40.

Belongs to the bacterial ribosomal protein bL31 family. Type A subfamily. As to quaternary structure, part of the 50S ribosomal subunit. Requires Zn(2+) as cofactor.

Binds the 23S rRNA. This Nitrosospira multiformis (strain ATCC 25196 / NCIMB 11849 / C 71) protein is Large ribosomal subunit protein bL31.